The following is a 626-amino-acid chain: UvrABC system protein C (626 aa).

In terms of domain architecture, GIY-YIG spans 26–105 (QEPGVYFMGD…IKQHQPHFNV (80 aa)). The region spanning 215–250 (QELHQLLTQQMEKAAADLKFEQAALIRDQINSLGKL) is the UVR domain.

This sequence belongs to the UvrC family. As to quaternary structure, interacts with UvrB in an incision complex.

The protein resides in the cytoplasm. Functionally, the UvrABC repair system catalyzes the recognition and processing of DNA lesions. UvrC both incises the 5' and 3' sides of the lesion. The N-terminal half is responsible for the 3' incision and the C-terminal half is responsible for the 5' incision. This chain is UvrABC system protein C, found in Synechocystis sp. (strain ATCC 27184 / PCC 6803 / Kazusa).